The following is a 160-amino-acid chain: Putative pre-16S rRNA nuclease (160 aa).

This sequence belongs to the YqgF nuclease family.

The protein localises to the cytoplasm. Its function is as follows. Could be a nuclease involved in processing of the 5'-end of pre-16S rRNA. The sequence is that of Putative pre-16S rRNA nuclease from Rhodopseudomonas palustris (strain HaA2).